Here is a 412-residue protein sequence, read N- to C-terminus: BSD domain-containing protein 1 (412 aa).

Residues 145 to 197 (WLSTFSLEERKAEISELLVSSPAIRALYTKMVPAAVAHAEFWQRYFYKVFQLE) form the BSD domain. Positions 208–217 (QRAEQTDHSE) are enriched in basic and acidic residues. 3 disordered regions span residues 208–227 (QRAE…EDEE), 253–272 (VTVA…ASLS), and 298–412 (ESVT…ENWE). Polar residues-rich tracts occupy residues 259-272 (PESS…ASLS) and 298-308 (ESVTIRVTQPS). S308 is subject to Phosphoserine. Residues 328-349 (PEERPAPREETAREDMAQDLRV) are compositionally biased toward basic and acidic residues. Positions 353-372 (NSDSGKSTPSNNGKKGSSTD) are enriched in polar residues. Composition is skewed to acidic residues over residues 373–390 (VSED…EEEV) and 400–412 (TEEL…ENWE).

The chain is BSD domain-containing protein 1 (bsdc1) from Danio rerio (Zebrafish).